The sequence spans 452 residues: Ketoisovalerate reductase BEA2 (452 aa).

70–75 (GPGNIG) provides a ligand contact to NADP(+). Lys285 acts as the Proton donor in catalysis. Residues Asn289, Asn293, and Ser393 each coordinate substrate. Glu405 is a binding site for NADP(+).

The protein belongs to the ketopantoate reductase family.

The catalysed reaction is (R)-2-hydroxy-3-methylbutanoate + NADP(+) = 3-methyl-2-oxobutanoate + NADPH + H(+). Functionally, ketoisovalerate reductase; part of the gene cluster that mediates the biosynthesis of beauvericin (BEA), a non-ribosomal cyclic hexadepsipeptide that shows antibiotic, antifungal, insecticidal, and cancer cell antiproliferative and antihaptotactic activity. Ketoisovalerate reductase BEA2 catalyzes the NADPH-specific reduction of ketoisovaleric acid to hydroxyisovalerate, a precursor for beauvericin biosynthesis. The nonribosomal cyclodepsipeptide synthetase BEA1 then catalyzes the formation of beauvericin via condensation and cyclization of 3 dipeptidol monomers, each composed of one unit of hydroxyisovalerate and one unit of N-methyl-phenylalanine. This is Ketoisovalerate reductase BEA2 from Gibberella fujikuroi (strain CBS 195.34 / IMI 58289 / NRRL A-6831) (Bakanae and foot rot disease fungus).